Reading from the N-terminus, the 251-residue chain is Ubiquinone/menaquinone biosynthesis C-methyltransferase UbiE (251 aa).

Residues T74, D95, and 123–124 (NA) each bind S-adenosyl-L-methionine.

This sequence belongs to the class I-like SAM-binding methyltransferase superfamily. MenG/UbiE family.

The catalysed reaction is a 2-demethylmenaquinol + S-adenosyl-L-methionine = a menaquinol + S-adenosyl-L-homocysteine + H(+). It catalyses the reaction a 2-methoxy-6-(all-trans-polyprenyl)benzene-1,4-diol + S-adenosyl-L-methionine = a 5-methoxy-2-methyl-3-(all-trans-polyprenyl)benzene-1,4-diol + S-adenosyl-L-homocysteine + H(+). It functions in the pathway quinol/quinone metabolism; menaquinone biosynthesis; menaquinol from 1,4-dihydroxy-2-naphthoate: step 2/2. The protein operates within cofactor biosynthesis; ubiquinone biosynthesis. In terms of biological role, methyltransferase required for the conversion of demethylmenaquinol (DMKH2) to menaquinol (MKH2) and the conversion of 2-polyprenyl-6-methoxy-1,4-benzoquinol (DDMQH2) to 2-polyprenyl-3-methyl-6-methoxy-1,4-benzoquinol (DMQH2). This Shewanella oneidensis (strain ATCC 700550 / JCM 31522 / CIP 106686 / LMG 19005 / NCIMB 14063 / MR-1) protein is Ubiquinone/menaquinone biosynthesis C-methyltransferase UbiE.